The chain runs to 204 residues: Urease accessory protein UreG 1 (204 aa).

14–21 (GPVGSGKT) is a binding site for GTP.

It belongs to the SIMIBI class G3E GTPase family. UreG subfamily. As to quaternary structure, homodimer. UreD, UreF and UreG form a complex that acts as a GTP-hydrolysis-dependent molecular chaperone, activating the urease apoprotein by helping to assemble the nickel containing metallocenter of UreC. The UreE protein probably delivers the nickel.

It localises to the cytoplasm. Its function is as follows. Facilitates the functional incorporation of the urease nickel metallocenter. This process requires GTP hydrolysis, probably effectuated by UreG. In Methylorubrum populi (strain ATCC BAA-705 / NCIMB 13946 / BJ001) (Methylobacterium populi), this protein is Urease accessory protein UreG 1.